Here is a 252-residue protein sequence, read N- to C-terminus: 14-3-3 protein 7 (252 aa).

Belongs to the 14-3-3 family. In terms of assembly, homodimer.

The polypeptide is 14-3-3 protein 7 (TFT7) (Solanum lycopersicum (Tomato)).